Here is a 214-residue protein sequence, read N- to C-terminus: Nascent polypeptide-associated complex subunit alpha (214 aa).

A disordered region spans residues 1–80 (MPGEATETVP…SEKKARKAMS (80 aa)). The span at 29-40 (SDSDDSPPELEQ) shows a compositional bias: acidic residues. A compositionally biased stretch (low complexity) spans 41-56 (DSTQTTTQQAQLAAAA). The NAC-A/B domain occupies 69–134 (SRSEKKARKA…AKIEDLSQQA (66 aa)). The region spanning 175-212 (VEVKDIELVMSQANVSRAKAVRALKNNSNDIVNAIMEL) is the UBA domain.

Belongs to the NAC-alpha family.

In terms of biological role, may promote appropriate targeting of ribosome-nascent polypeptide complexes. The polypeptide is Nascent polypeptide-associated complex subunit alpha (naca) (Xenopus tropicalis (Western clawed frog)).